The primary structure comprises 498 residues: ATP synthase subunit beta, chloroplastic (498 aa).

ATP is bound at residue 172-179 (GGAGVGKT).

Belongs to the ATPase alpha/beta chains family. In terms of assembly, F-type ATPases have 2 components, CF(1) - the catalytic core - and CF(0) - the membrane proton channel. CF(1) has five subunits: alpha(3), beta(3), gamma(1), delta(1), epsilon(1). CF(0) has four main subunits: a(1), b(1), b'(1) and c(9-12).

The protein resides in the plastid. The protein localises to the chloroplast thylakoid membrane. It catalyses the reaction ATP + H2O + 4 H(+)(in) = ADP + phosphate + 5 H(+)(out). Its function is as follows. Produces ATP from ADP in the presence of a proton gradient across the membrane. The catalytic sites are hosted primarily by the beta subunits. The sequence is that of ATP synthase subunit beta, chloroplastic from Calycanthus floridus (Eastern sweetshrub).